The primary structure comprises 229 residues: Secretory carrier-associated membrane protein 4 (229 aa).

Over 1–39 the chain is Cytoplasmic; it reads MSEKENNFPPLPKFIPVKPCFYQNFSDEIPVEHQVLVKR. Transmembrane regions (helical) follow at residues 40–60, 61–81, 105–125, and 149–169; these read IYRLWMFYCATLGVNLIACLA, WWIGGGSGTNFGLAFVWLLLF, FMAFFFIFGAQFVLTVIQAIG, and VVMLLPAIMFSVSAAMMAIAI. Topologically, residues 170-229 are cytoplasmic; sequence MKVHRIYRGAGGSFQKAQTEWNTGTWRNPPSREAQYNNFSGNSLPEYPTVPSYPGSGQWP. Residue Thr194 is modified to Phosphothreonine. The interval 208–229 is disordered; it reads FSGNSLPEYPTVPSYPGSGQWP.

Belongs to the SCAMP family.

It is found in the membrane. Its function is as follows. Probably involved in membrane protein trafficking. The polypeptide is Secretory carrier-associated membrane protein 4 (SCAMP4) (Pongo abelii (Sumatran orangutan)).